We begin with the raw amino-acid sequence, 130 residues long: Small ribosomal subunit protein bS6 (130 aa).

Residues 99 to 130 (ASPMVKAKDERRERHDFASEANDDSEAGDSEE) are disordered. Residues 104–116 (KAKDERRERHDFA) are compositionally biased toward basic and acidic residues. A compositionally biased stretch (acidic residues) spans 119–130 (ANDDSEAGDSEE).

This sequence belongs to the bacterial ribosomal protein bS6 family.

Functionally, binds together with bS18 to 16S ribosomal RNA. This chain is Small ribosomal subunit protein bS6, found in Yersinia enterocolitica serotype O:8 / biotype 1B (strain NCTC 13174 / 8081).